The primary structure comprises 468 residues: Aldehyde dehydrogenase family 3 member B1 (468 aa).

The residue at position 1 (methionine 1) is an N-acetylmethionine. An NAD(+)-binding site is contributed by 188–193; the sequence is GNTYVG. Active-site residues include glutamate 210 and cysteine 244. Residues cysteine 462 and cysteine 463 are each lipidated (S-palmitoyl cysteine). Cysteine 465 carries the cysteine methyl ester modification. A lipid anchor (S-geranylgeranyl cysteine) is attached at cysteine 465. Residues 466 to 468 constitute a propeptide, removed in mature form; the sequence is TLL.

Belongs to the aldehyde dehydrogenase family. Post-translationally, dually lipidated in the C-terminus; prenylation occurs prior to, and is a prerequisite for palmitoylation. It is also required for activity towards long-chain substrates.

It is found in the cell membrane. The catalysed reaction is an aldehyde + NAD(+) + H2O = a carboxylate + NADH + 2 H(+). It catalyses the reaction a long-chain fatty aldehyde + NAD(+) + H2O = a long-chain fatty acid + NADH + 2 H(+). It carries out the reaction a medium-chain fatty aldehyde + NAD(+) + H2O = a medium-chain fatty acid + NADH + 2 H(+). The enzyme catalyses octanal + NAD(+) + H2O = octanoate + NADH + 2 H(+). The catalysed reaction is nonanal + NAD(+) + H2O = nonanoate + NADH + 2 H(+). It catalyses the reaction hexadecanoate + NADH + 2 H(+) = hexadecanal + NAD(+) + H2O. It carries out the reaction (2E)-octenal + NAD(+) + H2O = (2E)-octenoate + NADH + 2 H(+). The enzyme catalyses (E)-non-2-enal + NAD(+) + H2O = (E)-non-2-enoate + NADH + 2 H(+). The catalysed reaction is (E)-4-hydroxynon-2-enal + NAD(+) + H2O = (E)-4-hydroxynon-2-enoate + NADH + 2 H(+). It catalyses the reaction (2E)-hexadecenal + NAD(+) + H2O = (E)-hexadec-2-enoate + NADH + 2 H(+). It carries out the reaction benzaldehyde + NAD(+) + H2O = benzoate + NADH + 2 H(+). The enzyme catalyses an aldehyde + NADP(+) + H2O = a carboxylate + NADPH + 2 H(+). The catalysed reaction is a medium-chain fatty aldehyde + NADP(+) + H2O = a medium-chain fatty acid + NADPH + 2 H(+). It catalyses the reaction hexanal + NADP(+) + H2O = hexanoate + NADPH + 2 H(+). It carries out the reaction octanal + NADP(+) + H2O = octanoate + NADPH + 2 H(+). The enzyme catalyses nonanal + NADP(+) + H2O = nonanoate + NADPH + 2 H(+). The catalysed reaction is (2E)-octenal + NADP(+) + H2O = (2E)-octenoate + NADPH + 2 H(+). It catalyses the reaction (E)-non-2-enal + NADP(+) + H2O = (E)-non-2-enoate + NADPH + 2 H(+). It carries out the reaction (E)-4-hydroxynon-2-enal + NADP(+) + H2O = (E)-4-hydroxynon-2-enoate + NADPH + 2 H(+). The enzyme catalyses benzaldehyde + NADP(+) + H2O = benzoate + NADPH + 2 H(+). The protein operates within alcohol metabolism; ethanol degradation; acetate from ethanol: step 2/2. Functionally, oxidizes medium and long chain saturated and unsaturated fatty aldehydes generated in the plasma membrane into non-toxic fatty acids. May have a protective role against the cytotoxicity induced by lipid peroxidation. Short-chain fatty aldehydes are not good substrates. Can use both NADP(+) and NAD(+) as electron acceptor in vitro, however in vivo preference will depend on their tissue levels. Low activity towards acetaldehyde and 3,4-dihydroxyphenylacetaldehyde. Able to metabolize aromatic aldehydes such as benzaldehyde to their acid form. This chain is Aldehyde dehydrogenase family 3 member B1 (Aldh3b1), found in Rattus norvegicus (Rat).